The following is a 314-amino-acid chain: UDP-3-O-acyl-N-acetylglucosamine deacetylase (314 aa).

Zn(2+)-binding residues include histidine 82, histidine 239, and aspartate 243. Histidine 266 acts as the Proton donor in catalysis.

Belongs to the LpxC family. The cofactor is Zn(2+).

The catalysed reaction is a UDP-3-O-[(3R)-3-hydroxyacyl]-N-acetyl-alpha-D-glucosamine + H2O = a UDP-3-O-[(3R)-3-hydroxyacyl]-alpha-D-glucosamine + acetate. It functions in the pathway glycolipid biosynthesis; lipid IV(A) biosynthesis; lipid IV(A) from (3R)-3-hydroxytetradecanoyl-[acyl-carrier-protein] and UDP-N-acetyl-alpha-D-glucosamine: step 2/6. Functionally, catalyzes the hydrolysis of UDP-3-O-myristoyl-N-acetylglucosamine to form UDP-3-O-myristoylglucosamine and acetate, the committed step in lipid A biosynthesis. In Myxococcus xanthus (strain DK1622), this protein is UDP-3-O-acyl-N-acetylglucosamine deacetylase.